A 233-amino-acid polypeptide reads, in one-letter code: Probable cyclic nucleotide phosphodiesterase COSY_0614 (233 aa).

D10, H12, D48, N78, H144, H183, and H185 together coordinate Fe cation. AMP contacts are provided by residues H12, D48, and 78–79; that span reads NH. H185 is a binding site for AMP.

The protein belongs to the cyclic nucleotide phosphodiesterase class-III family. Fe(2+) is required as a cofactor.

The protein is Probable cyclic nucleotide phosphodiesterase COSY_0614 of Vesicomyosocius okutanii subsp. Calyptogena okutanii (strain HA).